We begin with the raw amino-acid sequence, 160 residues long: Large ribosomal subunit protein bL17 (160 aa).

The span at 123-141 (DEKRQKRAEARAKRREEMQ) shows a compositional bias: basic and acidic residues. The segment at 123-160 (DEKRQKRAEARAKRREEMQKAMAEQQQAEGGEPEGGNE) is disordered. Positions 142–152 (KAMAEQQQAEG) are enriched in low complexity.

The protein belongs to the bacterial ribosomal protein bL17 family. As to quaternary structure, part of the 50S ribosomal subunit. Contacts protein L32.

The chain is Large ribosomal subunit protein bL17 from Acidobacterium capsulatum (strain ATCC 51196 / DSM 11244 / BCRC 80197 / JCM 7670 / NBRC 15755 / NCIMB 13165 / 161).